A 2090-amino-acid chain; its full sequence is MKSHTSAAKVVFLVGDQVDSWHNGLQHVIKAAGATPWLQSYLDDLSNAIKAEIAEAALDNALHASLGTFSSLLELGERYRHRSDDLGMAQCLLLHAVRSSLFLQMAKQSAHILSPESQTEWLGISGGLISLSPRFVAEDFETLREASIEIGRLFVRLCKLVSVRSRAIEDNTGVWGWAILGVSKDEIRKGLDKFQQNMRIPAIKRAQVGVTGPGWSTIIGPPSVLDLCIKQCPAIATATKNPLNIHALQHTLAITQTDLNYIVGNSQLMSRALHHIRPRLWGMDDPEATYQNWGDMLRAICSQVLSLSLDIPEAVANLGASLRGCDSVQIIQMDNTSHGPFVSTALKAPGRKATLLETHSYLQTQFQGTEPPQKTGRIAIVGMSGRGPRSDNIDEFWDVIMQKQDTCTEVPKDRFDIDEFYCEEHGKGNKICTMTTKYGCFMDKPGHFDARFFHISPRESMLMDPGHRHFLMSSYEALEMAGYSDGPTKLTDPNRIAAFYGQVTDDWHDQSHPTLGCDAYTLQGVQRAFSSGRLAWQFKWEGPTYSLDSACASTTAAIHLACMSLLSNDIDMAVAGASNILNYPHSFACLSKSGVLSDTGNCKPYRDDADGYCRADFVGSVVLKRLEDAVADNDNILAVIASSGRNHSGNSTSITSSDPGAQERLFRKVLRNANVSPDDISYVEMHGTGTPVGDPAEMSAVGNVFKHRRRADGPLPVGAVKANFGHSEGAAGMASLLKCIMMFKTDTIPPQAGMPHALNPNFPPLSELNVEIPAEPKEFKKTRSGEPRRILLNNFDAAGGNACLLLEDWDGSHSPVAQLEDTTDTRSSHVVTLSSRTQAAHKANKQNFLNWLRENTTARLADIAYTTAARRMHHPIRSAYTASTTEELMARVEASIQVSESSSLTSQQTPIIFVFSGQGSHYAGMGSDLYQTSPSFRETVDLCGHIGKIHGFPPFIDLIADKAIDMSTKSTVQTQLAVLTLEIGLAAFWKAAGVQPSAVMGHSLGEYAALHVSGVLSLADVLYLVGQRASLLLERCEENGFAMLAVAMSAKETQELLDSNKEFPSCSIACFNGPNATVISGEAHDISQLQGRVSKASKVLPVPYGFHSFQMDSIISEYSTLADGVTFSEPKIPVASTLVGSMIETKDIINSVYLAQQTRQPVDFIGGLNAIQQMFNDPIWLEIGPNQVCTQFVRASSSSSSPNTKTLSTLEGQSRDWVAINKCMAMLYTQGIAIDWLALHKPFMNSLRMVTLPAYAWDTKDYWITYAEAKAVQGTTSSAPRDIKQPIISTFAQHVAKESSSNAGKLEITFRASVADQNLQAVMEGHRMEQLPICPGSGFCEAAFSAAAYVLESIGRKEDATVTKMRLQHPVMHRPLTKNLVGPDGELFTTITMESKDSNNIHVSWKASASGPKSSMFEMGTCTLVVQKNVKALQATWDRTAYLVRDRMDSIIKSAEDGQGHWLKHDIFYSLFATTVQYDPLYKCTKMAYISNDFSEAVAEVVLQDNPADAKFMASPYWGEGIVHIAGFVVNANPLRSPGTCFINSGFESFEQTVEFRAGKSYLAYARAHQVEEGRKICQVFVFDSEGKIVAQCYNLSFVRISNALLQHNLSEGASKPVGRGMAKQEKQEVPATTEVVRQPEKEESRHSVDTPSFSDVLINTIVSETGLDPSELTDDTVVAELGVDSIMSIEIANKVSNATGEQLTPMFLHEYPTIGDIKRAFDILTPVSSESDAELTEEYDLLEDTVTEEAVVHVPSPSSTSLEAVVTGSITTKQRDAPQQPRSIGDGPEPAVRFTLLHGRASKRVQDQQASPSPFYLIADGTGSIATYLHLPPHINTKMTIYGVDSPYLHCPSRLTPDVGIPGIAKLIVDELVKRQPQGVPFWLGGFSGGAMIAYEIARQLSALGHVIDSLLLIDMCPPRQIQAQRYDDELGLAMFDAISGNDDSGVWESSDKTHQHLKALFASVSAYNPPPLAKGESPPAKRVALIWAQKGMIDRCANSPRFRQILADRGLVTESYPGFMEDPKLGPVAWSLIHKTESDLGPNGWDKFVGRDELLCMAVEADHLELPTPEFVHLLGEKMDMAFEHFGR.

The tract at residues 12–250 (FLVGDQVDSW…NPLNIHALQH (239 aa)) is N-terminal acylcarrier protein transacylase (SAT) domain. A Ketosynthase family 3 (KS3) domain is found at 375-808 (TGRIAIVGMS…GGNACLLLED (434 aa)). Active-site for beta-ketoacyl synthase activity residues include Cys551, His686, and His726. The malonyl-CoA:ACP transacylase (MAT) domain stretch occupies residues 912-1195 (IFVFSGQGSH…NQVCTQFVRA (284 aa)). Residue Ser1003 is the For acyl/malonyl transferase activity of the active site. Residues 1293 to 1433 (QHVAKESSSN…LVVQKNVKAL (141 aa)) are N-terminal hotdog fold. The PKS/mFAS DH domain occupies 1293–1607 (QHVAKESSSN…FVRISNALLQ (315 aa)). The interval 1304 to 1604 (GKLEITFRAS…NLSFVRISNA (301 aa)) is product template (PT) domain. Residues 1459 to 1607 (QGHWLKHDIF…FVRISNALLQ (149 aa)) form a C-terminal hotdog fold region. Residues 1615-1650 (SKPVGRGMAKQEKQEVPATTEVVRQPEKEESRHSVD) are disordered. The segment covering 1638 to 1649 (RQPEKEESRHSV) has biased composition (basic and acidic residues). Residues 1649 to 1726 (VDTPSFSDVL…DIKRAFDILT (78 aa)) enclose the Carrier domain. Ser1686 is subject to O-(pantetheine 4'-phosphoryl)serine. The segment at 1820-1964 (ADGTGSIATY…THQHLKALFA (145 aa)) is thioesterase (TE) domain.

Its pathway is secondary metabolite biosynthesis. Its function is as follows. Non-reducing polyketide synthase; part of the gene cluster that mediates the biosynthesis of radicicol, a resorcylic acid lactone (RAL) that irreversibly inhibits the HSP90 molecular chaperone, an important target for cancer chemotherapy. The radicicol cluster encodes only two apparent post-PKS enzymes, a cytochrome P450 monooxygenase (rdc4) and a non-heme halogenase (rdc2) that could introduce the epoxide and the chlorine, respectively. If this cluster includes all the genes required for radicicol biosynthesis, the remaining structural features of radicicol are presumably generated by the PKSs rdc1 and rdc5. The C-2' ketone could arise if the R-PKS rdc5 and NR-PKS rdc1 each carry out four iterations, in contrast to the five iteration-three iteration split for the hypothemycin PKSs. The origin of the cis 5',6' double bond is not known. The radicicol R-PKS rdc5 ER domain may catalyze either double bond isomerization or reduction in the third iteration. This Metacordyceps chlamydosporia (Nematophagous fungus) protein is Non-reducing polyketide synthase rdc1.